A 129-amino-acid polypeptide reads, in one-letter code: Small ribosomal subunit protein uS11 (129 aa).

It belongs to the universal ribosomal protein uS11 family. As to quaternary structure, part of the 30S ribosomal subunit. Interacts with proteins S7 and S18. Binds to IF-3.

Its function is as follows. Located on the platform of the 30S subunit, it bridges several disparate RNA helices of the 16S rRNA. Forms part of the Shine-Dalgarno cleft in the 70S ribosome. The chain is Small ribosomal subunit protein uS11 from Enterococcus faecalis (strain ATCC 700802 / V583).